Consider the following 420-residue polypeptide: Protein ECERIFERUM 26-like (420 aa).

Belongs to the plant acyltransferase family. Highly expressed in flowers. Expressed in leaves.

Functionally, involved in biosynthesis of the epicuticular wax. Plays a role in very-long-chain fatty acid (VLCFA) biosynthesis and is required for VLCFA elongation in leaf. Despite its classification as a BAHD acyltransferase based on sequence homology, CER26L does not seem to share the catalytic mechanism of the members of the BAHD family. The protein is Protein ECERIFERUM 26-like (CER26L) of Arabidopsis thaliana (Mouse-ear cress).